A 358-amino-acid polypeptide reads, in one-letter code: UDP-N-acetylglucosamine--N-acetylmuramyl-(pentapeptide) pyrophosphoryl-undecaprenol N-acetylglucosamine transferase (358 aa).

UDP-N-acetyl-alpha-D-glucosamine contacts are provided by residues 12–14 (TAG), Arg-165, Ser-195, and Gln-290.

It belongs to the glycosyltransferase 28 family. MurG subfamily.

Its subcellular location is the cell membrane. It carries out the reaction di-trans,octa-cis-undecaprenyl diphospho-N-acetyl-alpha-D-muramoyl-L-alanyl-D-glutamyl-meso-2,6-diaminopimeloyl-D-alanyl-D-alanine + UDP-N-acetyl-alpha-D-glucosamine = di-trans,octa-cis-undecaprenyl diphospho-[N-acetyl-alpha-D-glucosaminyl-(1-&gt;4)]-N-acetyl-alpha-D-muramoyl-L-alanyl-D-glutamyl-meso-2,6-diaminopimeloyl-D-alanyl-D-alanine + UDP + H(+). It functions in the pathway cell wall biogenesis; peptidoglycan biosynthesis. Its function is as follows. Cell wall formation. Catalyzes the transfer of a GlcNAc subunit on undecaprenyl-pyrophosphoryl-MurNAc-pentapeptide (lipid intermediate I) to form undecaprenyl-pyrophosphoryl-MurNAc-(pentapeptide)GlcNAc (lipid intermediate II). The protein is UDP-N-acetylglucosamine--N-acetylmuramyl-(pentapeptide) pyrophosphoryl-undecaprenol N-acetylglucosamine transferase of Clostridium tetani (strain Massachusetts / E88).